The primary structure comprises 460 residues: Ufm1-specific protease 2 (460 aa).

Active-site residues include cysteine 293, aspartate 417, and histidine 419.

The protein belongs to the peptidase C78 family.

The protein localises to the endoplasmic reticulum. Its subcellular location is the cytoplasm. It is found in the nucleus. Functionally, thiol-dependent isopeptidase that specifically cleaves UFM1, a ubiquitin-like modifier protein, from conjugated proteins. While it is also able to mediate the processing of UFM1 precursors, a prerequisite for conjugation reactions, UFSP2 mainly acts as a protein deUFMylase that mediates deconjugation of UFM1 from target proteins. This chain is Ufm1-specific protease 2, found in Gallus gallus (Chicken).